A 122-amino-acid chain; its full sequence is Serum amyloid A-2 protein (122 aa).

The N-terminal stretch at 1-19 is a signal peptide; the sequence is MKLLTSLVFCSLLLGVCHG. Positions 89 to 108 are enriched in basic and acidic residues; that stretch reads RGHEDTMADQEANRHGRSGK. A disordered region spans residues 89 to 122; that stretch reads RGHEDTMADQEANRHGRSGKDPNYYRPPGLPAKY.

It belongs to the SAA family. In terms of assembly, apolipoprotein of the HDL complex. In terms of tissue distribution, expressed by the liver; secreted in plasma.

It is found in the secreted. In terms of biological role, major acute phase reactant. This chain is Serum amyloid A-2 protein, found in Mus musculus (Mouse).